The chain runs to 876 residues: DNA topoisomerase 1 (876 aa).

The Toprim domain occupies 3-150 (KSLVIVESPA…RYKRVVFNEI (148 aa)). Glu9 is a binding site for Mg(2+). The tract at residues 37–69 (LPTAGQTATPTGKAAAASTKKASTTDKEQQKRE) is disordered. Positions 38 to 58 (PTAGQTATPTGKAAAASTKKA) are enriched in low complexity. Residues 59–69 (STTDKEQQKRE) are compositionally biased toward basic and acidic residues. Asp119 provides a ligand contact to Mg(2+). Positions 166–582 (NMDGVNAQQA…EFFADFSRDL (417 aa)) constitute a Topo IA-type catalytic domain. Positions 200 to 205 (SAGRVQ) are interaction with DNA. Tyr327 acts as the O-(5'-phospho-DNA)-tyrosine intermediate in catalysis. 2 consecutive C4-type zinc fingers follow at residues 668 to 695 (CPIC…NPNC) and 717 to 742 (CDKC…NDAC).

The protein belongs to the type IA topoisomerase family. Monomer. Mg(2+) is required as a cofactor.

It carries out the reaction ATP-independent breakage of single-stranded DNA, followed by passage and rejoining.. In terms of biological role, releases the supercoiling and torsional tension of DNA, which is introduced during the DNA replication and transcription, by transiently cleaving and rejoining one strand of the DNA duplex. Introduces a single-strand break via transesterification at a target site in duplex DNA. The scissile phosphodiester is attacked by the catalytic tyrosine of the enzyme, resulting in the formation of a DNA-(5'-phosphotyrosyl)-enzyme intermediate and the expulsion of a 3'-OH DNA strand. The free DNA strand then undergoes passage around the unbroken strand, thus removing DNA supercoils. Finally, in the religation step, the DNA 3'-OH attacks the covalent intermediate to expel the active-site tyrosine and restore the DNA phosphodiester backbone. The sequence is that of DNA topoisomerase 1 from Vibrio cholerae serotype O1 (strain ATCC 39315 / El Tor Inaba N16961).